Reading from the N-terminus, the 61-residue chain is Small ribosomal subunit protein uS14 (61 aa).

Residues Cys-24, Cys-27, Cys-40, and Cys-43 each contribute to the Zn(2+) site.

It belongs to the universal ribosomal protein uS14 family. Zinc-binding uS14 subfamily. Part of the 30S ribosomal subunit. Contacts proteins S3 and S10. The cofactor is Zn(2+).

Its function is as follows. Binds 16S rRNA, required for the assembly of 30S particles and may also be responsible for determining the conformation of the 16S rRNA at the A site. The polypeptide is Small ribosomal subunit protein uS14 (Streptococcus equi subsp. zooepidemicus (strain H70)).